The sequence spans 453 residues: Serine/threonine-protein kinase VRK3 (453 aa).

The interval 30–123 (EDGGTQSAVT…QSPQTLKRTR (94 aa)) is disordered. A compositionally biased stretch (polar residues) spans 33–46 (GTQSAVTPHVSSVP). Residues 49-64 (RRDLNSSFETSPKKVK) carry the Nuclear localization signal motif. Phosphoserine is present on residues serine 54, serine 55, serine 59, serine 82, serine 83, and serine 108. Residues 81-101 (DSSGSDNTLTSPDRATGTRSR) show a composition bias toward polar residues. The span at 109–123 (PLSNRQSPQTLKRTR) shows a compositional bias: polar residues. The Protein kinase domain maps to 125–436 (TTSLQALATG…TLRNSLEALL (312 aa)).

It belongs to the protein kinase superfamily. CK1 Ser/Thr protein kinase family. VRK subfamily. Interacts with DUSP3. Interacts with RAN. Interacts with HSP70/HSPA1A. Post-translationally, phosphorylated at Ser-108 by CDK5; leading to protection of the cell against H2O2-induced apoptosis. Ubiquitinated by RNF144A. In terms of tissue distribution, expressed in liver, kidney, muscle, thymus, and bone marrow. Weakly expressed in spleen.

The protein localises to the nucleus. It is found in the cytoplasm. The catalysed reaction is L-seryl-[protein] + ATP = O-phospho-L-seryl-[protein] + ADP + H(+). Functionally, plays a role in the regulation of the cell cycle by phosphorylating the nuclear envelope protein barrier-to-autointegration factor/BAF that is required for disassembly and reassembly, respectively, of the nuclear envelope during mitosis. Under normal physiological conditions, negatively regulates ERK activity along with VHR phosphatase in the nucleus, causing timely and transient action of ERK. Stress conditions activate CDK5 which phosphorylates VRK3 to increase VHR phosphatase activity and suppress prolonged ERK activation that causes cell death. For example, upon glutamate induction, promotes nuclear localization of HSP70/HSPA1A to inhibit ERK activation via VHR phosphatase. This chain is Serine/threonine-protein kinase VRK3 (Vrk3), found in Mus musculus (Mouse).